The following is a 303-amino-acid chain: D-alanine--D-alanine ligase (303 aa).

The 197-residue stretch at 102 to 298 (RILLAAAGLP…YPELCDWMVR (197 aa)) folds into the ATP-grasp domain. 128-181 (PLPAPYVIKPVAEGSSVGVEIVRTGDNRRAEIARTWRFGKEALVESFIPGRELT) provides a ligand contact to ATP. Residues aspartate 251, glutamate 265, and asparagine 267 each coordinate Mg(2+).

Belongs to the D-alanine--D-alanine ligase family. Mg(2+) serves as cofactor. Requires Mn(2+) as cofactor.

The protein localises to the cytoplasm. The catalysed reaction is 2 D-alanine + ATP = D-alanyl-D-alanine + ADP + phosphate + H(+). It participates in cell wall biogenesis; peptidoglycan biosynthesis. Its function is as follows. Cell wall formation. This chain is D-alanine--D-alanine ligase, found in Gluconobacter oxydans (strain 621H) (Gluconobacter suboxydans).